The primary structure comprises 305 residues: Olfactory receptor 4F4 (305 aa).

At 1 to 18 (MVTEFIFLGLSDSQELQT) the chain is on the extracellular side. A helical membrane pass occupies residues 19-42 (FLFMLFFVFYGGIVFGNLLIVITV). Residues 43 to 50 (VSDSHLHS) are Cytoplasmic-facing. Residues 51–72 (PMYFLLANLSLIDLSLSSVTAP) form a helical membrane-spanning segment. Topologically, residues 73 to 93 (KMITDFFSQRKVISFKGCLVQ) are extracellular. An intrachain disulfide couples Cys90 to Cys182. Residues 94–113 (IFLLHFFGGSEMVILIAMGF) traverse the membrane as a helical segment. The Cytoplasmic segment spans residues 114–132 (DRYIAICKPLHYTTIMCGN). The helical transmembrane segment at 133-151 (ACVGIMAVAWGIGFLHSVS) threads the bilayer. Residues 152–188 (QLAFAVHLPFCGPNEVDSFYCDLPRVIKLACTDTYRL) are Extracellular-facing. The helical transmembrane segment at 189–212 (DIMVIANSGVLTVCSFVLLIISYT) threads the bilayer. The Cytoplasmic segment spans residues 213-228 (IILMTIQHCPLDKSSK). A helical membrane pass occupies residues 229-251 (ALSTLTAHITVVLLFFGPCVFIY). The Extracellular segment spans residues 252–262 (AWPFPIKSLDK). A helical membrane pass occupies residues 263 to 282 (FLAVFYSVITPLLNPIIYTL). At 283–305 (RNKDMKTAIRRLRKWDAHSSVKF) the chain is on the cytoplasmic side.

It belongs to the G-protein coupled receptor 1 family.

Its subcellular location is the cell membrane. Odorant receptor. This chain is Olfactory receptor 4F4 (OR4F4), found in Homo sapiens (Human).